We begin with the raw amino-acid sequence, 435 residues long: Probable glycine dehydrogenase (decarboxylating) subunit 1 (435 aa).

Belongs to the GcvP family. N-terminal subunit subfamily. The glycine cleavage system is composed of four proteins: P, T, L and H. In this organism, the P 'protein' is a heterodimer of two subunits.

It catalyses the reaction N(6)-[(R)-lipoyl]-L-lysyl-[glycine-cleavage complex H protein] + glycine + H(+) = N(6)-[(R)-S(8)-aminomethyldihydrolipoyl]-L-lysyl-[glycine-cleavage complex H protein] + CO2. The glycine cleavage system catalyzes the degradation of glycine. The P protein binds the alpha-amino group of glycine through its pyridoxal phosphate cofactor; CO(2) is released and the remaining methylamine moiety is then transferred to the lipoamide cofactor of the H protein. This Coprothermobacter proteolyticus (strain ATCC 35245 / DSM 5265 / OCM 4 / BT) protein is Probable glycine dehydrogenase (decarboxylating) subunit 1.